A 159-amino-acid polypeptide reads, in one-letter code: ATP synthase subunit b 1 (159 aa).

The helical transmembrane segment at 5–25 (FWAFIGLILFLALLFYFKVPA) threads the bilayer.

The protein belongs to the ATPase B chain family. As to quaternary structure, F-type ATPases have 2 components, F(1) - the catalytic core - and F(0) - the membrane proton channel. F(1) has five subunits: alpha(3), beta(3), gamma(1), delta(1), epsilon(1). F(0) has three main subunits: a(1), b(2) and c(10-14). The alpha and beta chains form an alternating ring which encloses part of the gamma chain. F(1) is attached to F(0) by a central stalk formed by the gamma and epsilon chains, while a peripheral stalk is formed by the delta and b chains.

The protein resides in the cell inner membrane. F(1)F(0) ATP synthase produces ATP from ADP in the presence of a proton or sodium gradient. F-type ATPases consist of two structural domains, F(1) containing the extramembraneous catalytic core and F(0) containing the membrane proton channel, linked together by a central stalk and a peripheral stalk. During catalysis, ATP synthesis in the catalytic domain of F(1) is coupled via a rotary mechanism of the central stalk subunits to proton translocation. Its function is as follows. Component of the F(0) channel, it forms part of the peripheral stalk, linking F(1) to F(0). The chain is ATP synthase subunit b 1 from Bartonella bacilliformis (strain ATCC 35685 / KC583 / Herrer 020/F12,63).